The primary structure comprises 828 residues: Sarcolemmal membrane-associated protein (828 aa).

The necessary for targeting to centrosomes stretch occupies residues 1–163; the sequence is MPSALAIFTC…AANTPSMYSQ (163 aa). Residues 1-802 are Cytoplasmic-facing; the sequence is MPSALAIFTC…REKGNNKPWP (802 aa). Residues 28–85 enclose the FHA domain; it reads IKIGRSVARCRPAQNNATFDCKVLSRNHALVWFDHKTGKFYLQDTKSSNGTFINSQRL. Position 148 is a phosphoserine (Ser148). Coiled-coil stretches lie at residues 167–202 and 230–388; these read QLSQ…ASDT and NQTE…QEKT. Residues 339–359 form a helical; Anchor for type IV membrane protein membrane-spanning segment; the sequence is KKELQHKIDEMEEKEQELQAK. Over residues 433–446 the composition is skewed to basic and acidic residues; the sequence is KLSKENQTRAKESD. The tract at residues 433–467 is disordered; the sequence is KLSKENQTRAKESDFSDTLSPSKEKSSDDTTDAQM. Phosphoserine is present on residues Ser448 and Ser452. Residues 477–799 adopt a coiled-coil conformation; it reads AKVSLLKDDL…KLLREKGNNK (323 aa). Residues 803-823 form a helical; Anchor for type IV membrane protein membrane-spanning segment; sequence WMPMLAALVAVTAIVLYVPGL. The Extracellular portion of the chain corresponds to 824–828; it reads ARASP.

Belongs to the SLMAP family. In terms of assembly, homodimer. Interacts with myosin. Interacts with SIKE1 and both associate with the STRIPAK core complex composed of PP2A catalytic and scaffolding subunits, the striatins (PP2A regulatory subunits), the striatin-associated proteins MOB4, STRIP1 and STRIP2, PDCD10 and members of the STE20 kinases, such as STK24 and STK26. Interacts (via FHA domain) with STK3 (when phosphorylated); the interaction associates STK3 with the STRIPAK complex.

The protein resides in the cell membrane. It is found in the sarcolemma. It localises to the cytoplasm. The protein localises to the myofibril. Its subcellular location is the sarcomere. The protein resides in the m line. It is found in the z line. It localises to the cytoskeleton. The protein localises to the microtubule organizing center. Its subcellular location is the centrosome. The protein resides in the endoplasmic reticulum membrane. It is found in the mitochondrion membrane. Functionally, associates with the striatin-interacting phosphatase and kinase (STRIPAK) core complex, forming the extended (SIKE1:SLMAP)STRIPAK complex. The (SIKE1:SLMAP)STRIPAK complex dephosphorylates STK3 leading to the inhibition of Hippo signaling and the control of cell growth. May play a role during myoblast fusion. This is Sarcolemmal membrane-associated protein from Homo sapiens (Human).